Consider the following 76-residue polypeptide: Small ribosomal subunit protein bS18 (76 aa).

Belongs to the bacterial ribosomal protein bS18 family. In terms of assembly, part of the 30S ribosomal subunit. Forms a tight heterodimer with protein bS6.

Its function is as follows. Binds as a heterodimer with protein bS6 to the central domain of the 16S rRNA, where it helps stabilize the platform of the 30S subunit. In Xanthomonas campestris pv. campestris (strain 8004), this protein is Small ribosomal subunit protein bS18.